The following is a 274-amino-acid chain: Energy-coupling factor transporter ATP-binding protein EcfA1 (274 aa).

One can recognise an ABC transporter domain in the interval 10–241; it reads ASFQGVYFSY…AAELQKIRLD (232 aa). 42-49 contributes to the ATP binding site; it reads GHNGSGKS.

It belongs to the ABC transporter superfamily. Energy-coupling factor EcfA family. Forms a stable energy-coupling factor (ECF) transporter complex composed of 2 membrane-embedded substrate-binding proteins (S component), 2 ATP-binding proteins (A component) and 2 transmembrane proteins (T component).

The protein localises to the cell membrane. Functionally, ATP-binding (A) component of a common energy-coupling factor (ECF) ABC-transporter complex. Unlike classic ABC transporters this ECF transporter provides the energy necessary to transport a number of different substrates. The polypeptide is Energy-coupling factor transporter ATP-binding protein EcfA1 (Mycoplasma pneumoniae (strain ATCC 29342 / M129 / Subtype 1) (Mycoplasmoides pneumoniae)).